A 243-amino-acid chain; its full sequence is Peptidyl-tRNA hydrolase (243 aa).

Y14 is a tRNA binding site. The Proton acceptor role is filled by H19. TRNA contacts are provided by F64, N66, and N112. The segment at 184–225 (AAQTRPAEKAKPLATAKPKEGEARTSGGSVAEVGAPPPSPTG) is disordered. Basic and acidic residues predominate over residues 189 to 206 (PAEKAKPLATAKPKEGEA).

The protein belongs to the PTH family. As to quaternary structure, monomer.

The protein resides in the cytoplasm. The catalysed reaction is an N-acyl-L-alpha-aminoacyl-tRNA + H2O = an N-acyl-L-amino acid + a tRNA + H(+). Its function is as follows. Hydrolyzes ribosome-free peptidyl-tRNAs (with 1 or more amino acids incorporated), which drop off the ribosome during protein synthesis, or as a result of ribosome stalling. Catalyzes the release of premature peptidyl moieties from peptidyl-tRNA molecules trapped in stalled 50S ribosomal subunits, and thus maintains levels of free tRNAs and 50S ribosomes. The sequence is that of Peptidyl-tRNA hydrolase from Rhodospirillum rubrum (strain ATCC 11170 / ATH 1.1.1 / DSM 467 / LMG 4362 / NCIMB 8255 / S1).